The sequence spans 576 residues: Vesicular glutamate transporter 1 (576 aa).

Topologically, residues 1–63 (MEFRKEEFKK…CTCFGLPRRY (63 aa)) are cytoplasmic. A helical membrane pass occupies residues 64–84 (IIAIMSGLGFCISFGIRCNLG). The Vesicular segment spans residues 85-116 (VAIVSMVNNNTVYKGNKIVIEQAQFTWDPETV). An N-linked (GlcNAc...) asparagine glycan is attached at N93. The helical transmembrane segment at 117–137 (GMIHGSFFWGYIVTQIPGGYI) threads the bilayer. Topologically, residues 138–140 (CQK) are cytoplasmic. The chain crosses the membrane as a helical span at residues 141–161 (FAANRVFGFAIVATSTLNMLI). At 162–168 (PSAARVH) the chain is on the vesicular side. Residues 169–189 (FACVICVRILQGLVEGVTYPA) traverse the membrane as a helical segment. The Cytoplasmic portion of the chain corresponds to 190–208 (CHGIWSKWAPPLERSRLAT). The chain crosses the membrane as a helical span at residues 209–229 (TAFCGSYAGAVVAMPLAGVLV). Residues 230 to 236 (QYSGWSS) are Vesicular-facing. Residues 237-257 (VFYVYGSFGIMWYMFWILVSY) form a helical membrane-spanning segment. The Cytoplasmic portion of the chain corresponds to 258–302 (ESPAIHPTISEEEKKYIEESIGESTGLMNPMAKFKAPWRKFFTSM). Residues 303 to 323 (PVYAIIVANFCRSWTFYLLLI) form a helical membrane-spanning segment. Topologically, residues 324–341 (SQPAYFEEVFGFEISKVG) are vesicular. Residues 342-362 (LLSALPHLVMTIIVPIGGQIA) form a helical membrane-spanning segment. The Cytoplasmic segment spans residues 363 to 378 (DFLRTKRIMSTTNVRK). Residues 379–399 (MMNCGGFGMEATLLLVVGYSH) form a helical membrane-spanning segment. Over 400–401 (SR) the chain is Vesicular. A helical transmembrane segment spans residues 402–422 (GVAISFLVLAVGFSGFAISGF). The Cytoplasmic segment spans residues 423 to 435 (NVNHLDIAPRYAS). A helical transmembrane segment spans residues 436–456 (ILMGISNGVGTLSGMVCPLIV). At 457-469 (GAMTKHKTREEWQ) the chain is on the vesicular side. Residues 470–490 (YVFLIASLVHYGGVLFYGIFA) traverse the membrane as a helical segment. Over 491 to 576 (SGEKQPWAEP…YGTVAERDLS (86 aa)) the chain is Cytoplasmic. The segment at 517 to 547 (ADESEEQSQAYGAYGSYGATQTTSQQNGGWT) is disordered. Residues 534 to 545 (GATQTTSQQNGG) are compositionally biased toward polar residues.

The protein belongs to the major facilitator superfamily. Sodium/anion cotransporter family. VGLUT subfamily.

It is found in the cytoplasmic vesicle. The protein localises to the secretory vesicle. The protein resides in the synaptic vesicle membrane. It localises to the cell membrane. Its subcellular location is the synapse. It is found in the synaptosome. The catalysed reaction is L-glutamate(out) = L-glutamate(in). It carries out the reaction chloride(in) = chloride(out). It catalyses the reaction 3 Na(+)(out) + phosphate(out) = 3 Na(+)(in) + phosphate(in). The enzyme catalyses phosphate(in) = phosphate(out). The catalysed reaction is K(+)(in) + H(+)(out) = K(+)(out) + H(+)(in). With respect to regulation, chloride channel activity is allosterically activated by lumenal H(+) and Cl(-) leading to synaptic vesicles acidification. The L-glutamate transport activity is allosterically activated by lumenal H(+) and Cl(-). The allosteric activation by H(+) efficiently prevents non-vesicular efflux across the plasma membrane, thereby restricting L-glutamate transport activity to acidic membranes such as synaptic vesicles. Multifunctional transporter that transports L-glutamate as well as multiple ions such as chloride, proton, potassium, sodium and phosphate. At the synaptic vesicle membrane, mainly functions as an uniporter which transports preferentially L-glutamate but also phosphate from the cytoplasm into synaptic vesicles at presynaptic nerve terminals of excitatory neural cells. The L-glutamate or phosphate uniporter activity is electrogenic and is driven by the proton electrochemical gradient, mainly by the electrical gradient established by the vacuolar H(+)-ATPase across the synaptic vesicle membrane. In addition, functions as a chloride channel that allows a chloride permeation through the synaptic vesicle membrane that affects the proton electrochemical gradient and promotes synaptic vesicles acidification. Moreover, may function as a K(+)/H(+) antiport allowing to maintain the electrical gradient and to decrease chemical gradient and therefore sustain vesicular glutamate uptake. The vesicular K(+)/H(+) antiport activity is electroneutral. At the plasma membrane, following exocytosis, functions as a symporter of Na(+) and phosphate from the extracellular space to the cytoplasm allowing synaptic phosphate homeostasis regulation. The symporter activity is driven by an inside negative membrane potential and is electrogenic. Is necessary for synaptic signaling of visual-evoked responses from photoreceptors. This is Vesicular glutamate transporter 1 from Xenopus tropicalis (Western clawed frog).